The primary structure comprises 169 residues: Phosphopantetheine adenylyltransferase (169 aa).

Serine 10 is a binding site for substrate. Residues 10–11 (SF) and histidine 18 contribute to the ATP site. Positions 42, 74, and 88 each coordinate substrate. Residues 89–91 (GLR), glutamate 99, and 124–130 (YAFLSSS) contribute to the ATP site.

Belongs to the bacterial CoaD family. Homohexamer. The cofactor is Mg(2+).

The protein localises to the cytoplasm. It carries out the reaction (R)-4'-phosphopantetheine + ATP + H(+) = 3'-dephospho-CoA + diphosphate. Its pathway is cofactor biosynthesis; coenzyme A biosynthesis; CoA from (R)-pantothenate: step 4/5. Reversibly transfers an adenylyl group from ATP to 4'-phosphopantetheine, yielding dephospho-CoA (dPCoA) and pyrophosphate. The sequence is that of Phosphopantetheine adenylyltransferase from Geobacillus sp. (strain WCH70).